A 299-amino-acid polypeptide reads, in one-letter code: Probable lipid kinase YegS-like (299 aa).

The region spanning A2–T133 is the DAGKc domain. ATP contacts are provided by residues T40, G66–E72, and T95. L215, D218, and L220 together coordinate Mg(2+). E271 functions as the Proton acceptor in the catalytic mechanism.

It belongs to the diacylglycerol/lipid kinase family. YegS lipid kinase subfamily. The cofactor is Mg(2+). Requires Ca(2+) as cofactor.

The protein resides in the cytoplasm. Probably phosphorylates lipids; the in vivo substrate is unknown. This chain is Probable lipid kinase YegS-like, found in Enterobacter sp. (strain 638).